We begin with the raw amino-acid sequence, 64 residues long: MKFMLNLYVLGIMLTLLSIFVRVMESLGGLLESPLPGSSWITRGQLANTQPPKGLPDHPSRGVQ.

Positions 1 to 37 (MKFMLNLYVLGIMLTLLSIFVRVMESLGGLLESPLPG) are required for targeting to lipid droplets. A helical transmembrane segment spans residues 7-24 (LYVLGIMLTLLSIFVRVM). The segment covering 42–51 (TRGQLANTQP) has biased composition (polar residues). The disordered stretch occupies residues 42 to 64 (TRGQLANTQPPKGLPDHPSRGVQ). Residues 55-64 (LPDHPSRGVQ) show a composition bias toward basic and acidic residues.

The protein resides in the lipid droplet. It localises to the secreted. It is found in the membrane. Its function is as follows. Increases intracellular lipid accumulation. Stimulates expression of cytokines including IL6, MIF and VEGFA. Enhances cell growth and proliferation. This chain is Hypoxia-inducible lipid droplet-associated protein (Hilpda), found in Mus musculus (Mouse).